Reading from the N-terminus, the 441-residue chain is ATP-dependent protease ATPase subunit HslU (441 aa).

ATP contacts are provided by residues isoleucine 18 and 60–65 (GVGKTE). Residues 131-158 (ILDALLPRPRGSEYDHARDESSTRQTFR) are disordered. The span at 140-152 (RGSEYDHARDESS) shows a compositional bias: basic and acidic residues. ATP contacts are provided by aspartate 254, glutamate 320, and arginine 392.

It belongs to the ClpX chaperone family. HslU subfamily. As to quaternary structure, a double ring-shaped homohexamer of HslV is capped on each side by a ring-shaped HslU homohexamer. The assembly of the HslU/HslV complex is dependent on binding of ATP.

It localises to the cytoplasm. ATPase subunit of a proteasome-like degradation complex; this subunit has chaperone activity. The binding of ATP and its subsequent hydrolysis by HslU are essential for unfolding of protein substrates subsequently hydrolyzed by HslV. HslU recognizes the N-terminal part of its protein substrates and unfolds these before they are guided to HslV for hydrolysis. This Chromohalobacter salexigens (strain ATCC BAA-138 / DSM 3043 / CIP 106854 / NCIMB 13768 / 1H11) protein is ATP-dependent protease ATPase subunit HslU.